Consider the following 103-residue polypeptide: MDINNIINNNKNNNDINYFEFPNNFIFVNNNTPPSSPSFSSETSSPPLSPLLPTSCRNDTYNNLVSNSNEGKFVFHNLFINEDNKHLFHKYFTSRKNLYKKYD.

This is an uncharacterized protein from Dictyostelium discoideum (Social amoeba).